A 135-amino-acid chain; its full sequence is Small ribosomal subunit protein bS16 (135 aa).

Belongs to the bacterial ribosomal protein bS16 family.

The protein is Small ribosomal subunit protein bS16 of Prosthecochloris aestuarii (strain DSM 271 / SK 413).